Consider the following 513-residue polypeptide: ATP synthase subunit alpha (513 aa).

169–176 contacts ATP; that stretch reads GDRQTGKT.

Belongs to the ATPase alpha/beta chains family. As to quaternary structure, F-type ATPases have 2 components, CF(1) - the catalytic core - and CF(0) - the membrane proton channel. CF(1) has five subunits: alpha(3), beta(3), gamma(1), delta(1), epsilon(1). CF(0) has three main subunits: a(1), b(2) and c(9-12). The alpha and beta chains form an alternating ring which encloses part of the gamma chain. CF(1) is attached to CF(0) by a central stalk formed by the gamma and epsilon chains, while a peripheral stalk is formed by the delta and b chains.

The protein resides in the cell inner membrane. The enzyme catalyses ATP + H2O + 4 H(+)(in) = ADP + phosphate + 5 H(+)(out). In terms of biological role, produces ATP from ADP in the presence of a proton gradient across the membrane. The alpha chain is a regulatory subunit. The polypeptide is ATP synthase subunit alpha (Vibrio vulnificus (strain CMCP6)).